We begin with the raw amino-acid sequence, 717 residues long: SUN domain-containing protein 2 (717 aa).

Positions 1-66 are disordered; that stretch reads MSRRSQRLTR…PQLGPSSDAH (66 aa). The segment at 1 to 139 is LMNA-binding; the sequence is MSRRSQRLTR…SSSGYSSEDD (139 aa). At 1–212 the chain is on the nuclear side; that stretch reads MSRRSQRLTR…LTRRFSSLKT (212 aa). A Phosphoserine modification is found at Ser-12. Over residues 19 to 32 the composition is skewed to low complexity; the sequence is SSSSGGSSVAGSQS. Residues Ser-38 and Ser-54 each carry the phosphoserine modification. The residue at position 107 (Thr-107) is a Phosphothreonine. Residues Ser-110, Ser-113, Ser-116, and Ser-136 each carry the phosphoserine modification. The chain crosses the membrane as a helical span at residues 213–233; that stretch reads FLWFLLPLLLLTCLTYGAWYF. The Perinuclear space portion of the chain corresponds to 234–717; that stretch reads YPYGLQTFHP…RFRVHGEPAH (484 aa). Coiled-coil stretches lie at residues 273 to 296, 348 to 440, and 475 to 506; these read EQRV…EFSS, RRET…EEVG, and LLQR…SARE. Residues 507–717 are sufficient for interaction with SYNE1 and SYNE2; the sequence is AAASLSLTLQ…RFRVHGEPAH (211 aa). One can recognise an SUN domain in the interval 555–716; sequence GASVISTRCS…YRFRVHGEPA (162 aa). Cys-601 and Cys-705 are oxidised to a cystine. Residue Asn-636 is glycosylated (N-linked (GlcNAc...) asparagine).

As to quaternary structure, core component of the LINC complex which is composed of inner nuclear membrane SUN domain-containing proteins coupled to outer nuclear membrane KASH domain-containing nesprins. SUN and KASH domain-containing proteins seem to bind each other promiscuously; however, differentially expression of LINC complex constituents is giving rise to specific assemblies. At least SUN1/2-containing core LINC complexes are proposed to be hexameric composed of three protomers of each KASH and SUN domain-containing protein. Interacts with SYNE2; the SUN2:SYNE2/KASH2 LINC complex is a heterohexamer; the homotrimeric cloverleave-like conformation of the SUN domain is a prerequisite for LINC complex formation in which three separate SYNE2/KASH2 peptides bind at the interface of adjacent SUN domains. Component of a probable SUN2:KASH5 LINC complex. Interacts with SYNE1 and SYNE3; probably forming respective LINC complexes. Interacts with A-type lamin. Interaction with lamins B1 and C is hardly detectable. Interacts with EMD and RAB5A. Interacts with TMEM43. Interacts with TMEM201. In terms of processing, the disulfide bond with SYNE2 is required for stability of the SUN2:SYNE2/KASH2 LINC complex under tensile forces though not required for the interaction. The disulfide bond is proposed to be conserved in LINC complexes involved in force transmission. Widely expressed. Highly expressed in heart, lung and muscle. Weakly expressed in fetal heart. Slightly overexpressed in some heart tissues form patients with congenital heart defects.

It localises to the nucleus inner membrane. Its subcellular location is the nucleus envelope. The protein localises to the endosome membrane. In terms of biological role, as a component of the LINC (LInker of Nucleoskeleton and Cytoskeleton) complex, involved in the connection between the nuclear lamina and the cytoskeleton. The nucleocytoplasmic interactions established by the LINC complex play an important role in the transmission of mechanical forces across the nuclear envelope and in nuclear movement and positioning. Specifically, SYNE2 and SUN2 assemble in arrays of transmembrane actin-associated nuclear (TAN) lines which are bound to F-actin cables and couple the nucleus to retrograde actin flow during actin-dependent nuclear movement. Required for interkinetic nuclear migration (INM) and essential for nucleokinesis and centrosome-nucleus coupling during radial neuronal migration in the cerebral cortex and during glial migration. Required for nuclear migration in retinal photoreceptor progenitors implicating association with cytoplasmic dynein-dynactin and kinesin motor complexes, and probably B-type lamins; SUN1 and SUN2 seem to act redundantly. The SUN1/2:KASH5 LINC complex couples telomeres to microtubules during meiosis; SUN1 and SUN2 seem to act at least partial redundantly. Anchors chromosome movement in the prophase of meiosis and is involved in selective gene expression of coding and non-coding RNAs needed for gametogenesis. Required for telomere attachment to nuclear envelope and gametogenesis. May also function on endocytic vesicles as a receptor for RAB5-GDP and participate in the activation of RAB5. The chain is SUN domain-containing protein 2 from Homo sapiens (Human).